The chain runs to 714 residues: Calpain-1 catalytic subunit (714 aa).

A Calpain catalytic domain is found at 55-354; sequence LFRDEAFPPV…FTRLEICNLT (300 aa). Ca(2+)-binding residues include Gln109 and Asp114. Residues Cys115, His272, and Asn296 contribute to the active site. 3 residues coordinate Ca(2+): Asn316, Asp318, and Asp323. Thr354 is modified (phosphothreonine). Residues 355-526 form a domain III region; sequence PDALKSRTIR…KSAGTAELDD (172 aa). The interval 527–542 is linker; that stretch reads QIQANLPDEQVLSEEE. 4 consecutive EF-hand domains span residues 541 to 576, 585 to 618, 615 to 650, and 680 to 714; these read EEID…IISK, FSLE…NRIR, NRIR…AGFK, and VRLE…TMFA. Residues 543–713 form a domain IV region; that stretch reads IDENFKALFR…LFKWLQLTMF (171 aa). Residues Asp598, Asp600, Asn602, Lys604, Glu609, Asp628, Asp630, Ser632, Ser634, and Glu639 each contribute to the Ca(2+) site.

This sequence belongs to the peptidase C2 family. Forms a heterodimer with a small (regulatory) subunit CAPNS1. Ca(2+) is required as a cofactor. Post-translationally, undergoes calcium-induced successive autoproteolytic cleavages that generate a membrane-bound 78 kDa active form and an intracellular 75 kDa active form. Calpastatin reduces with high efficiency the transition from 78 kDa to 75 kDa calpain forms.

It localises to the cytoplasm. The protein localises to the cell membrane. The enzyme catalyses Broad endopeptidase specificity.. Activated by micromolar concentrations of calcium and inhibited by calpastatin. Calcium-regulated non-lysosomal thiol-protease which catalyzes limited proteolysis of substrates involved in cytoskeletal remodeling and signal transduction. Proteolytically cleaves CTBP1. Cleaves and activates caspase-7 (CASP7). The chain is Calpain-1 catalytic subunit from Pongo abelii (Sumatran orangutan).